The primary structure comprises 217 residues: Deoxyribose-phosphate aldolase (217 aa).

The Proton donor/acceptor role is filled by D89. Residue K151 is the Schiff-base intermediate with acetaldehyde of the active site. The active-site Proton donor/acceptor is K180.

It belongs to the DeoC/FbaB aldolase family. DeoC type 1 subfamily.

It is found in the cytoplasm. The enzyme catalyses 2-deoxy-D-ribose 5-phosphate = D-glyceraldehyde 3-phosphate + acetaldehyde. Its pathway is carbohydrate degradation; 2-deoxy-D-ribose 1-phosphate degradation; D-glyceraldehyde 3-phosphate and acetaldehyde from 2-deoxy-alpha-D-ribose 1-phosphate: step 2/2. Functionally, catalyzes a reversible aldol reaction between acetaldehyde and D-glyceraldehyde 3-phosphate to generate 2-deoxy-D-ribose 5-phosphate. The protein is Deoxyribose-phosphate aldolase of Metamycoplasma arthritidis (strain 158L3-1) (Mycoplasma arthritidis).